We begin with the raw amino-acid sequence, 486 residues long: 6-phosphogluconate dehydrogenase, decarboxylating 2 (486 aa).

Residues 12 to 17, 35 to 37, 79 to 81, and N107 contribute to the NADP(+) site; these read GLAVMG, NRT, and VKA. Substrate contacts are provided by residues N107 and 133–135; that span reads SGG. The active-site Proton acceptor is K188. 191–192 contacts substrate; it reads HN. E195 (proton donor) is an active-site residue. Substrate contacts are provided by Y196, K266, R293, R456, and H462. Residues 484-486 carry the Microbody targeting signal motif; the sequence is SKI.

The protein belongs to the 6-phosphogluconate dehydrogenase family. As to quaternary structure, forms homodimer. Forms heterodimers with PGD1 or PGD3.

It localises to the cytoplasm. The protein resides in the cytosol. The protein localises to the peroxisome. The enzyme catalyses 6-phospho-D-gluconate + NADP(+) = D-ribulose 5-phosphate + CO2 + NADPH. Its pathway is carbohydrate degradation; pentose phosphate pathway; D-ribulose 5-phosphate from D-glucose 6-phosphate (oxidative stage): step 3/3. In terms of biological role, catalyzes the oxidative decarboxylation of 6-phosphogluconate to ribulose 5-phosphate and CO(2), with concomitant reduction of NADP to NADPH. Required for guided growth of the male gametophytes and interaction between the pollen tube and the ovule. The chain is 6-phosphogluconate dehydrogenase, decarboxylating 2 from Arabidopsis thaliana (Mouse-ear cress).